The following is a 241-amino-acid chain: Adenosylcobinamide-GDP ribazoletransferase (241 aa).

7 consecutive transmembrane segments (helical) span residues 34-54, 55-75, 109-129, 133-153, 165-185, 186-206, and 221-241; these read RIPA…FTGS, FLSL…GFYL, VGPF…ELIT, PVAF…VLVF, MLFP…LPLL, LIDV…GFLI, and VLGG…NYLI.

It belongs to the CobS family. Requires Mg(2+) as cofactor.

It localises to the cell inner membrane. The enzyme catalyses alpha-ribazole + adenosylcob(III)inamide-GDP = adenosylcob(III)alamin + GMP + H(+). It carries out the reaction alpha-ribazole 5'-phosphate + adenosylcob(III)inamide-GDP = adenosylcob(III)alamin 5'-phosphate + GMP + H(+). It functions in the pathway cofactor biosynthesis; adenosylcobalamin biosynthesis; adenosylcobalamin from cob(II)yrinate a,c-diamide: step 7/7. Functionally, joins adenosylcobinamide-GDP and alpha-ribazole to generate adenosylcobalamin (Ado-cobalamin). Also synthesizes adenosylcobalamin 5'-phosphate from adenosylcobinamide-GDP and alpha-ribazole 5'-phosphate. In Fervidobacterium nodosum (strain ATCC 35602 / DSM 5306 / Rt17-B1), this protein is Adenosylcobinamide-GDP ribazoletransferase.